Consider the following 827-residue polypeptide: DNA gyrase subunit A (827 aa).

The Topo IIA-type catalytic domain maps to Leu-38–Leu-501. Tyr-126 acts as the O-(5'-phospho-DNA)-tyrosine intermediate in catalysis. The short motif at Gln-528–Gly-534 is the GyrA-box element.

It belongs to the type II topoisomerase GyrA/ParC subunit family. As to quaternary structure, heterotetramer, composed of two GyrA and two GyrB chains. In the heterotetramer, GyrA contains the active site tyrosine that forms a transient covalent intermediate with DNA, while GyrB binds cofactors and catalyzes ATP hydrolysis.

Its subcellular location is the cytoplasm. It catalyses the reaction ATP-dependent breakage, passage and rejoining of double-stranded DNA.. A type II topoisomerase that negatively supercoils closed circular double-stranded (ds) DNA in an ATP-dependent manner to modulate DNA topology and maintain chromosomes in an underwound state. Negative supercoiling favors strand separation, and DNA replication, transcription, recombination and repair, all of which involve strand separation. Also able to catalyze the interconversion of other topological isomers of dsDNA rings, including catenanes and knotted rings. Type II topoisomerases break and join 2 DNA strands simultaneously in an ATP-dependent manner. This Helicobacter pylori (strain ATCC 700392 / 26695) (Campylobacter pylori) protein is DNA gyrase subunit A.